The chain runs to 170 residues: Large ribosomal subunit protein bL17 (170 aa).

The protein belongs to the bacterial ribosomal protein bL17 family. As to quaternary structure, part of the 50S ribosomal subunit. Contacts protein L32.

This chain is Large ribosomal subunit protein bL17, found in Azobacteroides pseudotrichonymphae genomovar. CFP2.